The sequence spans 140 residues: Nucleoside diphosphate kinase (140 aa).

ATP is bound by residues K11, F59, R87, T93, R104, and N114. H117 functions as the Pros-phosphohistidine intermediate in the catalytic mechanism.

This sequence belongs to the NDK family. Homotetramer. It depends on Mg(2+) as a cofactor.

Its subcellular location is the cytoplasm. The catalysed reaction is a 2'-deoxyribonucleoside 5'-diphosphate + ATP = a 2'-deoxyribonucleoside 5'-triphosphate + ADP. It catalyses the reaction a ribonucleoside 5'-diphosphate + ATP = a ribonucleoside 5'-triphosphate + ADP. In terms of biological role, major role in the synthesis of nucleoside triphosphates other than ATP. The ATP gamma phosphate is transferred to the NDP beta phosphate via a ping-pong mechanism, using a phosphorylated active-site intermediate. This Chelativorans sp. (strain BNC1) protein is Nucleoside diphosphate kinase.